A 60-amino-acid chain; its full sequence is Large ribosomal subunit protein uL30 (60 aa).

Belongs to the universal ribosomal protein uL30 family. Part of the 50S ribosomal subunit.

This Salinispora tropica (strain ATCC BAA-916 / DSM 44818 / JCM 13857 / NBRC 105044 / CNB-440) protein is Large ribosomal subunit protein uL30.